Reading from the N-terminus, the 308-residue chain is Methionyl-tRNA formyltransferase (308 aa).

Residue 109 to 112 (SLLP) coordinates (6S)-5,6,7,8-tetrahydrofolate.

This sequence belongs to the Fmt family.

The enzyme catalyses L-methionyl-tRNA(fMet) + (6R)-10-formyltetrahydrofolate = N-formyl-L-methionyl-tRNA(fMet) + (6S)-5,6,7,8-tetrahydrofolate + H(+). In terms of biological role, attaches a formyl group to the free amino group of methionyl-tRNA(fMet). The formyl group appears to play a dual role in the initiator identity of N-formylmethionyl-tRNA by promoting its recognition by IF2 and preventing the misappropriation of this tRNA by the elongation apparatus. The protein is Methionyl-tRNA formyltransferase of Phenylobacterium zucineum (strain HLK1).